A 159-amino-acid polypeptide reads, in one-letter code: VAICNPLLYTISMPKSLCMKLVAGSYLGGVLNSLTQTCCLLPLPFCGPNVINHYFCDTNPLLKLTCSDGRLNELLLVTFNGTISMTVLLIIVISYVYILVSILSIRSARGRHKAFSTCASHLLTVTLFYVPAGLSHMQPGSKYSLDMEKVTAVFYTLLV.

Residues valine 1–serine 16 lie on the Cytoplasmic side of the membrane. Residues leucine 17 to leucine 41 form a helical membrane-spanning segment. Residues proline 42–threonine 82 are Extracellular-facing. Residue asparagine 80 is glycosylated (N-linked (GlcNAc...) asparagine). The chain crosses the membrane as a helical span at residues isoleucine 83–leucine 103. Residues serine 104–serine 116 lie on the Cytoplasmic side of the membrane. The helical transmembrane segment at threonine 117 to methionine 137 threads the bilayer. Topologically, residues glutamine 138–glutamate 148 are extracellular. Residues lysine 149–valine 159 traverse the membrane as a helical segment.

This sequence belongs to the G-protein coupled receptor 1 family.

It is found in the cell membrane. Odorant receptor. The polypeptide is Olfactory receptor-like protein COR8 (COR8) (Gallus gallus (Chicken)).